Here is a 293-residue protein sequence, read N- to C-terminus: MEITFQKVEHRYQYKTPFERRALYDVDVSFPSGGYYAIIGHTGSGKSTMIQHLNGLLQPTNGTVQIGERFISAGKKEKKLKPLRKKVGVVFQFPEHQLFEETVEKDICFGPTNFGVSEEAAKQKAREAIELVGLEPELLARSPFELSGGQMRRVAIAGVLAMEPEVLVLDEPTAGLDPKGQNELMEMFYKLHKEKGLTVILVTHNMEDAAKYAEQIVVMHKGTVFLQGSAEEVFSHADELEKIGVDLPMSLKYKRAIEEKFGISIPKATLSLEDLTHEVVQVLRKGGHESCSS.

Residues 3 to 246 form the ABC transporter domain; sequence ITFQKVEHRY…ADELEKIGVD (244 aa). Residue 40-47 participates in ATP binding; sequence GHTGSGKS.

It belongs to the ABC transporter superfamily. Energy-coupling factor EcfA family. As to quaternary structure, forms a stable energy-coupling factor (ECF) transporter complex composed of 2 membrane-embedded substrate-binding proteins (S component), 2 ATP-binding proteins (A component) and 2 transmembrane proteins (T component).

The protein localises to the cell membrane. Functionally, ATP-binding (A) component of a common energy-coupling factor (ECF) ABC-transporter complex. Unlike classic ABC transporters this ECF transporter provides the energy necessary to transport a number of different substrates. The sequence is that of Energy-coupling factor transporter ATP-binding protein EcfA2 from Bacillus thuringiensis (strain Al Hakam).